The following is a 444-amino-acid chain: Sonic hedgehog protein (444 aa).

The first 24 residues, 1-24 (MLVATQSLLLLSFICTLVTPPGLA), serve as a signal peptide directing secretion. Residue C25 is the site of N-palmitoyl cysteine attachment. Positions 33–39 (KRRHPKK) match the Cardin-Weintraub motif. The Ca(2+) site is built by E90, E91, D96, T126, E127, D130, and D132. Zn(2+) is bound by residues H141, D148, and H183. G198 carries the Cholesterol glycine ester lipid modification. Repeat copies occupy residues 386–393 (QVDLQSHH), 394–401 (QVDLQSHH), and 403–409 (VDLQSHH). Residues 386–409 (QVDLQSHHQVDLQSHHQVDLQSHH) form a 3 X 8 AA tandem repeats of Q-V-D-L-Q-S-H-H region.

This sequence belongs to the hedgehog family. As to quaternary structure, interacts with HHATL/GUP1 which negatively regulates HHAT-mediated palmitoylation of the SHH N-terminus. Interacts with BOC and CDON. Interacts with HHIP. Interacts with DISP1 via its cholesterol anchor. Interacts with SCUBE2. In terms of assembly, multimer. Post-translationally, the C-terminal domain displays an autoproteolysis activity and a cholesterol transferase activity. Both activities result in the cleavage of the full-length protein and covalent attachment of a cholesterol moiety to the C-terminal of the newly generated N-terminal fragment (ShhN). Cholesterylation is required for the sonic hedgehog protein N-product targeting to lipid rafts and multimerization. ShhN is the active species in both local and long-range signaling, whereas the C-product (ShhC) is degraded in the reticulum endoplasmic. In terms of processing, N-palmitoylation by HHAT of ShhN is required for sonic hedgehog protein N-product multimerization and full activity. It is a prerequisite for the membrane-proximal positioning and the subsequent shedding of this N-terminal peptide. The lipidated N- and C-terminal peptides of ShhNp can be cleaved (shedding). The N-terminal palmitoylated peptide is cleaved at the Cardin-Weintraub (CW) motif site. The cleavage reduced the interactions with heparan sulfate. The cleavage is enhanced by SCUBE2. In terms of tissue distribution, strongly expressed in notochord and neural floor plate during embryogenesis. In tadpole, high expression is observed in pancreas/stomach, moderate expression in tail, and low expression in intestine, brain, and hind limb.

It localises to the endoplasmic reticulum membrane. The protein localises to the golgi apparatus membrane. Its subcellular location is the cell membrane. It catalyses the reaction glycyl-L-cysteinyl-[protein] + cholesterol + H(+) = [protein]-C-terminal glycyl cholesterol ester + N-terminal L-cysteinyl-[protein]. The C-terminal part of the sonic hedgehog protein precursor displays an autoproteolysis and a cholesterol transferase activity. Both activities result in the cleavage of the full-length protein into two parts (ShhN and ShhC) followed by the covalent attachment of a cholesterol moiety to the C-terminal of the newly generated ShhN. Both activities occur in the endoplasmic reticulum. Once cleaved, ShhC is degraded in the endoplasmic reticulum. Functionally, the dually lipidated sonic hedgehog protein N-product (ShhNp) is a morphogen which is essential for a variety of patterning events during development. Induces ventral cell fate in the neural tube and somites. Involved in the patterning of the anterior-posterior axis of the developing limb bud. Essential for axon guidance. Binds to the patched (PTCH1) receptor, which functions in association with smoothened (SMO), to activate the transcription of target genes. In the absence of SHH, PTCH1 represses the constitutive signaling activity of SMO. This is Sonic hedgehog protein from Xenopus laevis (African clawed frog).